Here is a 371-residue protein sequence, read N- to C-terminus: Antibiotic efflux pump periplasmic linker protein ArpA (371 aa).

The signal sequence occupies residues 1–22; sequence MQFKPAVTALVSAVALATLLSG. Cys-23 carries the N-palmitoyl cysteine lipid modification. Residue Cys-23 is the site of S-diacylglycerol cysteine attachment. The stretch at 115 to 155 forms a coiled coil; that stretch reads LAERYKQLIDEQAVSKQEYDDANAKRLQAEASLKSAQIDLR.

The protein belongs to the membrane fusion protein (MFP) (TC 8.A.1) family.

It is found in the cell inner membrane. Functionally, the periplasmic linker protein component of an antibiotic efflux pump. Confers resistance to numerous structurally unrelated antibiotics such as carbenicillin, chloramphenicol, erythromycin, novobiocin, streptomycin and tetracycline. Is not involved in organic solvent efflux. The protein is Antibiotic efflux pump periplasmic linker protein ArpA (arpA) of Pseudomonas putida (Arthrobacter siderocapsulatus).